The following is a 624-amino-acid chain: Chaperone protein DnaK (624 aa).

The residue at position 174 (Thr174) is a Phosphothreonine; by autocatalysis. Disordered regions lie at residues 544-563 (KKAQQENNLDDMKQKRDDLS) and 576-624 (NAQK…DDKK). Positions 581–600 (QQAQGGPASGAATDAGAAQG) are enriched in low complexity. Residues 601–624 (SDDKKSDDDTINGDYKDVSDDDKK) are compositionally biased toward basic and acidic residues.

It belongs to the heat shock protein 70 family.

Its function is as follows. Acts as a chaperone. The chain is Chaperone protein DnaK from Lacticaseibacillus casei (strain BL23) (Lactobacillus casei).